The primary structure comprises 1220 residues: ATP-dependent helicase/deoxyribonuclease subunit B (1220 aa).

Residues 1–281 form the UvrD-like helicase ATP-binding domain; that stretch reads MSMRFIVGRA…VFLTETHRFE (281 aa). 8–15 contacts ATP; that stretch reads GRAGTGKS. Residues 283 to 590 form the UvrD-like helicase C-terminal domain; it reads AGLKHLERFY…LVGSLDRSRN (308 aa). Cys-788 provides a ligand contact to [4Fe-4S] cluster. Residues 989–1008 form a disordered region; that stretch reads LAEGSKGSEGSEGSEDSEDS. Residues Cys-1128, Cys-1131, and Cys-1137 each coordinate [4Fe-4S] cluster. The span at 1162–1171 shows a compositional bias: polar residues; it reads RVQSQDSEQY. The tract at residues 1162 to 1220 is disordered; it reads RVQSQDSEQYPEQHPPTSVPGETSRRALQKDGGNSPRGQELIWLGEDEAGAGKEDDGHE. The segment covering 1211–1220 has biased composition (basic and acidic residues); that stretch reads GAGKEDDGHE.

The protein belongs to the helicase family. AddB/RexB type 1 subfamily. As to quaternary structure, heterodimer of AddA and AddB. Requires Mg(2+) as cofactor. It depends on [4Fe-4S] cluster as a cofactor.

Its function is as follows. The heterodimer acts as both an ATP-dependent DNA helicase and an ATP-dependent, dual-direction single-stranded exonuclease. Recognizes the chi site generating a DNA molecule suitable for the initiation of homologous recombination. The AddB subunit has 5' -&gt; 3' nuclease activity but not helicase activity. In Desulfitobacterium hafniense (strain Y51), this protein is ATP-dependent helicase/deoxyribonuclease subunit B.